The primary structure comprises 102 residues: Putative ubiquitin-like protein FUBI-like protein ENSP00000310146 (102 aa).

A Ubiquitin-like domain is found at 23–99; the sequence is LCPQVAYVRA…LEVVGRRLGV (77 aa).

This is Putative ubiquitin-like protein FUBI-like protein ENSP00000310146 from Homo sapiens (Human).